The sequence spans 364 residues: DNA replication and repair protein RecF (364 aa).

30 to 37 is a binding site for ATP; it reads GDNGAGKT.

The protein belongs to the RecF family.

It localises to the cytoplasm. In terms of biological role, the RecF protein is involved in DNA metabolism; it is required for DNA replication and normal SOS inducibility. RecF binds preferentially to single-stranded, linear DNA. It also seems to bind ATP. The protein is DNA replication and repair protein RecF of Stenotrophomonas maltophilia (strain R551-3).